The following is a 290-amino-acid chain: Glycine--tRNA ligase alpha subunit (290 aa).

Belongs to the class-II aminoacyl-tRNA synthetase family. As to quaternary structure, tetramer of two alpha and two beta subunits.

It is found in the cytoplasm. The enzyme catalyses tRNA(Gly) + glycine + ATP = glycyl-tRNA(Gly) + AMP + diphosphate. The sequence is that of Glycine--tRNA ligase alpha subunit from Prochlorococcus marinus (strain NATL2A).